We begin with the raw amino-acid sequence, 297 residues long: Putative thiosulfate sulfurtransferase SseA (297 aa).

Rhodanese domains are found at residues 31–138 (GAPG…ETTL) and 168–286 (ILGA…VPIV). The active-site Cysteine persulfide intermediate is the C245. R250 provides a ligand contact to substrate.

It carries out the reaction thiosulfate + hydrogen cyanide = thiocyanate + sulfite + 2 H(+). The chain is Putative thiosulfate sulfurtransferase SseA (sseA) from Mycobacterium tuberculosis (strain CDC 1551 / Oshkosh).